The following is a 120-amino-acid chain: Large ribosomal subunit protein uL18 (120 aa).

It belongs to the universal ribosomal protein uL18 family. Part of the 50S ribosomal subunit; part of the 5S rRNA/L5/L18/L25 subcomplex. Contacts the 5S and 23S rRNAs.

Its function is as follows. This is one of the proteins that bind and probably mediate the attachment of the 5S RNA into the large ribosomal subunit, where it forms part of the central protuberance. This is Large ribosomal subunit protein uL18 from Methylorubrum populi (strain ATCC BAA-705 / NCIMB 13946 / BJ001) (Methylobacterium populi).